Here is a 299-residue protein sequence, read N- to C-terminus: NAD kinase (299 aa).

Catalysis depends on Asp71, which acts as the Proton acceptor. Residues 71-72 (DG), 145-146 (ND), Arg173, Asp175, 186-191 (TAYALS), Ala210, and Gln248 each bind NAD(+).

This sequence belongs to the NAD kinase family. A divalent metal cation serves as cofactor.

The protein resides in the cytoplasm. The catalysed reaction is NAD(+) + ATP = ADP + NADP(+) + H(+). Functionally, involved in the regulation of the intracellular balance of NAD and NADP, and is a key enzyme in the biosynthesis of NADP. Catalyzes specifically the phosphorylation on 2'-hydroxyl of the adenosine moiety of NAD to yield NADP. The polypeptide is NAD kinase (Bordetella avium (strain 197N)).